A 318-amino-acid polypeptide reads, in one-letter code: Olfactory receptor-like protein COR1 (318 aa).

Residues methionine 1–proline 26 are Extracellular-facing. Residue asparagine 5 is glycosylated (N-linked (GlcNAc...) asparagine). Residues leucine 27–isoleucine 49 traverse the membrane as a helical segment. Residues serine 50–threonine 57 lie on the Cytoplasmic side of the membrane. A helical transmembrane segment spans residues proline 58–proline 79. Topologically, residues lysine 80–glutamine 100 are extracellular. A disulfide bridge connects residues cysteine 97 and cysteine 179. Residues tyrosine 101–tyrosine 120 form a helical membrane-spanning segment. At aspartate 121–alanine 139 the chain is on the cytoplasmic side. A helical transmembrane segment spans residues valine 140–leucine 164. At lysine 165–leucine 205 the chain is on the extracellular side. A helical transmembrane segment spans residues phenylalanine 206–valine 226. The Cytoplasmic segment spans residues methionine 227–serine 239. A helical transmembrane segment spans residues threonine 240–leucine 260. The Extracellular portion of the chain corresponds to arginine 261–aspartate 271. A helical membrane pass occupies residues lysine 272–tryptophan 292. Residues arginine 293–glutamine 318 are Cytoplasmic-facing.

The protein belongs to the G-protein coupled receptor 1 family.

Its subcellular location is the cell membrane. Functionally, odorant receptor. This chain is Olfactory receptor-like protein COR1 (COR1), found in Gallus gallus (Chicken).